Here is a 228-residue protein sequence, read N- to C-terminus: Small ribosomal subunit protein uS2 (228 aa).

Belongs to the universal ribosomal protein uS2 family.

This Blochmanniella pennsylvanica (strain BPEN) protein is Small ribosomal subunit protein uS2.